The following is a 125-amino-acid chain: Fluoride-specific ion channel FluC (125 aa).

A run of 4 helical transmembrane segments spans residues 1–21 (MIQA…RYYV), 32–52 (AFPW…GVFA), 68–88 (LLIT…LDAI), and 101–121 (IYIA…LAVM). Residues G75 and T78 each coordinate Na(+).

The protein belongs to the fluoride channel Fluc/FEX (TC 1.A.43) family.

The protein localises to the cell inner membrane. It carries out the reaction fluoride(in) = fluoride(out). Na(+) is not transported, but it plays an essential structural role and its presence is essential for fluoride channel function. Fluoride-specific ion channel. Important for reducing fluoride concentration in the cell, thus reducing its toxicity. The sequence is that of Fluoride-specific ion channel FluC from Rhizobium johnstonii (strain DSM 114642 / LMG 32736 / 3841) (Rhizobium leguminosarum bv. viciae).